A 167-amino-acid polypeptide reads, in one-letter code: Small ribosomal subunit protein uS5 (167 aa).

An S5 DRBM domain is found at 12–75; it reads LEDNVVAINR…EAARKNLIEV (64 aa).

Belongs to the universal ribosomal protein uS5 family. Part of the 30S ribosomal subunit. Contacts proteins S4 and S8.

Its function is as follows. With S4 and S12 plays an important role in translational accuracy. In terms of biological role, located at the back of the 30S subunit body where it stabilizes the conformation of the head with respect to the body. This Levilactobacillus brevis (strain ATCC 367 / BCRC 12310 / CIP 105137 / JCM 1170 / LMG 11437 / NCIMB 947 / NCTC 947) (Lactobacillus brevis) protein is Small ribosomal subunit protein uS5.